The primary structure comprises 333 residues: Dehydrodolichyl diphosphate synthase complex subunit DHDDS (333 aa).

(2E,6E)-farnesyl diphosphate is bound by residues D34, G35, R37, R38, and R85. 8 residues coordinate isopentenyl diphosphate: D34, G35, R37, R38, R85, R205, R211, and S213. Mg(2+) is bound at residue D34.

The protein belongs to the UPP synthase family. In terms of assembly, the active dehydrodolichyl diphosphate synthase complex is a heterotetramer composed of a dimer of heterodimer of DHDDS and NUS1. Interacts with NPC2. Mg(2+) is required as a cofactor. In terms of tissue distribution, ubiquitous. Expressed at high levels in testis and kidney. Expressed in epididymis (at protein level).

Its subcellular location is the endoplasmic reticulum membrane. The catalysed reaction is n isopentenyl diphosphate + (2E,6E)-farnesyl diphosphate = a di-trans,poly-cis-polyprenyl diphosphate + n diphosphate. The protein operates within protein modification; protein glycosylation. Its pathway is lipid metabolism. Its activity is regulated as follows. Activated by phospholipids including cardiolipin, phosphatidylcholine, phosphatidylethanolamine, phosphatidylinositol and phosphatidylserine. Its function is as follows. With NUS1, forms the dehydrodolichyl diphosphate synthase (DDS) complex, an essential component of the dolichol monophosphate (Dol-P) biosynthetic machinery. Both subunits contribute to enzymatic activity, i.e. condensation of multiple copies of isopentenyl pyrophosphate (IPP) to farnesyl pyrophosphate (FPP) to produce dehydrodolichyl diphosphate (Dedol-PP), a precursor of dolichol phosphate which is utilized as a sugar carrier in protein glycosylation in the endoplasmic reticulum (ER). Synthesizes long-chain polyprenols, mostly of C95 and C100 chain length. Regulates the glycosylation and stability of nascent NPC2, thereby promoting trafficking of LDL-derived cholesterol. The chain is Dehydrodolichyl diphosphate synthase complex subunit DHDDS from Homo sapiens (Human).